Here is a 186-residue protein sequence, read N- to C-terminus: ATP synthase subunit delta (186 aa).

This sequence belongs to the ATPase delta chain family. As to quaternary structure, F-type ATPases have 2 components, F(1) - the catalytic core - and F(0) - the membrane proton channel. F(1) has five subunits: alpha(3), beta(3), gamma(1), delta(1), epsilon(1). CF(0) has four main subunits: a(1), b(1), b'(1) and c(10-14). The alpha and beta chains form an alternating ring which encloses part of the gamma chain. F(1) is attached to F(0) by a central stalk formed by the gamma and epsilon chains, while a peripheral stalk is formed by the delta, b and b' chains.

Its subcellular location is the cell inner membrane. Functionally, f(1)F(0) ATP synthase produces ATP from ADP in the presence of a proton or sodium gradient. F-type ATPases consist of two structural domains, F(1) containing the extramembraneous catalytic core and F(0) containing the membrane proton channel, linked together by a central stalk and a peripheral stalk. During catalysis, ATP synthesis in the catalytic domain of F(1) is coupled via a rotary mechanism of the central stalk subunits to proton translocation. Its function is as follows. This protein is part of the stalk that links CF(0) to CF(1). It either transmits conformational changes from CF(0) to CF(1) or is implicated in proton conduction. This is ATP synthase subunit delta from Rhodopseudomonas palustris (strain ATCC BAA-98 / CGA009).